The following is a 202-amino-acid chain: Na(+)-translocating NADH-quinone reductase subunit E (202 aa).

Helical transmembrane passes span 11-31, 35-55, 79-99, 114-134, 144-164, and 180-200; these read AVFIENMALAFFLGMCTFIAI, VETAIGLGIAVIVVQTITVPA, LSFLGLLSYIGVIAAIVQILE, GVFLPLITVNCAIMGGTLFMV, VVYGMGSGLSWALAIALLAGI, and LGITFITIGLMSLGFMSFSGV.

Belongs to the NqrDE/RnfAE family. Composed of six subunits; NqrA, NqrB, NqrC, NqrD, NqrE and NqrF.

The protein localises to the cell inner membrane. It carries out the reaction a ubiquinone + n Na(+)(in) + NADH + H(+) = a ubiquinol + n Na(+)(out) + NAD(+). In terms of biological role, NQR complex catalyzes the reduction of ubiquinone-1 to ubiquinol by two successive reactions, coupled with the transport of Na(+) ions from the cytoplasm to the periplasm. NqrA to NqrE are probably involved in the second step, the conversion of ubisemiquinone to ubiquinol. The sequence is that of Na(+)-translocating NADH-quinone reductase subunit E from Stutzerimonas stutzeri (strain A1501) (Pseudomonas stutzeri).